Here is a 259-residue protein sequence, read N- to C-terminus: Small ribosomal subunit protein uS2 (259 aa).

Belongs to the universal ribosomal protein uS2 family.

The chain is Small ribosomal subunit protein uS2 from Streptococcus pneumoniae serotype 2 (strain D39 / NCTC 7466).